Reading from the N-terminus, the 435-residue chain is D-amino acid dehydrogenase (435 aa).

Residue 3 to 17 coordinates FAD; it reads VIVLGGGVLGVSTAW.

This sequence belongs to the DadA oxidoreductase family. The cofactor is FAD.

The enzyme catalyses a D-alpha-amino acid + A + H2O = a 2-oxocarboxylate + AH2 + NH4(+). The protein operates within amino-acid degradation; D-alanine degradation; NH(3) and pyruvate from D-alanine: step 1/1. Functionally, oxidative deamination of D-amino acids. The chain is D-amino acid dehydrogenase from Chromobacterium violaceum (strain ATCC 12472 / DSM 30191 / JCM 1249 / CCUG 213 / NBRC 12614 / NCIMB 9131 / NCTC 9757 / MK).